The chain runs to 852 residues: Nucleolar protein 14 homolog (852 aa).

The segment at 1 to 40 is disordered; sequence MVAKGKKASADAVYAKKTTRSANPFDNSTAQSSKRGNPFD. Over residues 20 to 35 the composition is skewed to polar residues; the sequence is RSANPFDNSTAQSSKR. The stretch at 190–221 forms a coiled coil; sequence IDEMIVEQKRRKNEIAKEKDEVYDLTEKLDAN. Disordered regions lie at residues 288–324 and 338–410; these read RRMR…GEDD and LGTH…KSAD. Residues 344 to 353 show a composition bias toward basic and acidic residues; that stretch reads GKKEAVLKGD. Residues 354 to 381 are compositionally biased toward acidic residues; it reads ENEDDDDKEGEEEEEEDSDEESDSEVDN. A coiled-coil region spans residues 774–851; it reads KMSKAKEERA…ELSRAKKKKK (78 aa).

The protein belongs to the NOP14 family. As to quaternary structure, component of the ribosomal small subunit (SSU) processome.

The protein localises to the nucleus. It is found in the nucleolus. Involved in nucleolar processing of pre-18S ribosomal RNA. Has a role in the nuclear export of 40S pre-ribosomal subunit to the cytoplasm. The sequence is that of Nucleolar protein 14 homolog (l(3)07882) from Drosophila melanogaster (Fruit fly).